Reading from the N-terminus, the 207-residue chain is Sodium/potassium-transporting ATPase subunit beta-1-interacting protein 1 (207 aa).

The N-terminal stretch at 1-21 (MGKCSGRCTLVAFCCLQLVAA) is a signal peptide. Topologically, residues 22–34 (LERQIFDFLGYQW) are extracellular. Residues 35–55 (APILANFLHIMAVILGIFGTV) traverse the membrane as a helical segment. Residues 56-61 (QYRSRY) are Cytoplasmic-facing. A helical transmembrane segment spans residues 62–82 (LILYAAWLVLWVGWNAFIICF). Topologically, residues 83–146 (YLEVGQLSQD…GCLLDYPYIE (64 aa)) are extracellular. A glycan (N-linked (GlcNAc...) asparagine) is linked at Asn100. A helical membrane pass occupies residues 147–167 (ALSSALQIFLALFGFVFACYV). Residues 168 to 207 (SKVFLEEEDSFDFIGGFDSYGYQAPQKTSHLQLQPLYTSG) lie on the Cytoplasmic side of the membrane.

The protein belongs to the NKAIN family. Interacts with ATP1B1 C-terminus.

It is found in the cell membrane. The sequence is that of Sodium/potassium-transporting ATPase subunit beta-1-interacting protein 1 (NKAIN1) from Homo sapiens (Human).